Here is a 347-residue protein sequence, read N- to C-terminus: Protein RecA (347 aa).

65–72 contributes to the ATP binding site; it reads GPESSGKT. The interval 325 to 347 is disordered; the sequence is KLGISDGDVEETEDAPKSLFDEE. Basic and acidic residues predominate over residues 338-347; the sequence is DAPKSLFDEE.

It belongs to the RecA family.

It is found in the cytoplasm. Its function is as follows. Can catalyze the hydrolysis of ATP in the presence of single-stranded DNA, the ATP-dependent uptake of single-stranded DNA by duplex DNA, and the ATP-dependent hybridization of homologous single-stranded DNAs. It interacts with LexA causing its activation and leading to its autocatalytic cleavage. The chain is Protein RecA from Staphylococcus aureus (strain Mu3 / ATCC 700698).